A 279-amino-acid chain; its full sequence is Oxygen-dependent coproporphyrinogen-III oxidase (279 aa).

S102 is a substrate binding site. Residues H106 and H116 each coordinate a divalent metal cation. H116 acts as the Proton donor in catalysis. Residue 118-120 (NTR) participates in substrate binding. A divalent metal cation-binding residues include H149 and H179. Residues 244–279 (YVEFNLLYDRGTKFGLMTDGNVEAILMSLPPEVKWA) are important for dimerization.

It belongs to the aerobic coproporphyrinogen-III oxidase family. Homodimer. A divalent metal cation serves as cofactor.

It localises to the cytoplasm. It carries out the reaction coproporphyrinogen III + O2 + 2 H(+) = protoporphyrinogen IX + 2 CO2 + 2 H2O. It functions in the pathway porphyrin-containing compound metabolism; protoporphyrin-IX biosynthesis; protoporphyrinogen-IX from coproporphyrinogen-III (O2 route): step 1/1. Involved in the heme biosynthesis. Catalyzes the aerobic oxidative decarboxylation of propionate groups of rings A and B of coproporphyrinogen-III to yield the vinyl groups in protoporphyrinogen-IX. This Rickettsia bellii (strain RML369-C) protein is Oxygen-dependent coproporphyrinogen-III oxidase.